A 396-amino-acid chain; its full sequence is Formate-dependent phosphoribosylglycinamide formyltransferase (396 aa).

Residues 25–26 (EL) and E85 each bind N(1)-(5-phospho-beta-D-ribosyl)glycinamide. ATP is bound by residues R117, K158, 163-168 (SSGKGQ), 198-201 (EAFI), and E206. The 190-residue stretch at 122–311 (RLAAETLAIP…EFALHVRAIL (190 aa)) folds into the ATP-grasp domain. Mg(2+) contacts are provided by E270 and E282. N(1)-(5-phospho-beta-D-ribosyl)glycinamide-binding positions include D289, K359, and 366–367 (RR).

This sequence belongs to the PurK/PurT family. In terms of assembly, homodimer.

It carries out the reaction N(1)-(5-phospho-beta-D-ribosyl)glycinamide + formate + ATP = N(2)-formyl-N(1)-(5-phospho-beta-D-ribosyl)glycinamide + ADP + phosphate + H(+). It participates in purine metabolism; IMP biosynthesis via de novo pathway; N(2)-formyl-N(1)-(5-phospho-D-ribosyl)glycinamide from N(1)-(5-phospho-D-ribosyl)glycinamide (formate route): step 1/1. In terms of biological role, involved in the de novo purine biosynthesis. Catalyzes the transfer of formate to 5-phospho-ribosyl-glycinamide (GAR), producing 5-phospho-ribosyl-N-formylglycinamide (FGAR). Formate is provided by PurU via hydrolysis of 10-formyl-tetrahydrofolate. The chain is Formate-dependent phosphoribosylglycinamide formyltransferase from Shewanella frigidimarina (strain NCIMB 400).